Here is a 96-residue protein sequence, read N- to C-terminus: Conantokin Rl-C (96 aa).

The first 21 residues, 1-21 (MQLYTYLYLLVPLVTFHLILG), serve as a signal peptide directing secretion. The propeptide occupies 22-78 (TGTLDHGDALTERRSADATALKPEPVLLQKSSARSTDDNGKDTQMKRIFKKRRNKAR). Residues 36-85 (SADATALKPEPVLLQKSSARSTDDNGKDTQMKRIFKKRRNKARGEEELSE) form a disordered region. Residues 56–66 (STDDNGKDTQM) are compositionally biased toward basic and acidic residues. Glu-81 serves as a coordination point for a divalent metal cation. Residues Glu-81, Glu-82, Glu-85, Glu-89, and Glu-93 each carry the 4-carboxyglutamate modification. Positions 85, 89, and 93 each coordinate a divalent metal cation. Asn-96 carries the asparagine amide modification.

It belongs to the conotoxin B superfamily. Requires Ca(2+) as cofactor. Mg(2+) is required as a cofactor. As to expression, expressed by the venom duct.

The protein localises to the secreted. In terms of biological role, conantokins inhibit N-methyl-D-aspartate (NMDA) receptors. This toxin has antagonist activity on NR2B/GRIN2B (IC(50)=1.4 uM) and NR2A/GRIN2A (IC(50)=2.9 uM) subunits, when tested on rat receptors. The sequence is that of Conantokin Rl-C from Conus rolani (Cone snail).